Reading from the N-terminus, the 68-residue chain is Beta-defensin 1 (68 aa).

A signal peptide spans 1-21; it reads MRTSYLLLFTLCLLLSEMASG. Positions 22 to 32 are excised as a propeptide; it reads DNFLTGLGHRS. Cystine bridges form between C37/C66, C44/C59, and C49/C67.

This sequence belongs to the beta-defensin family. In terms of assembly, monomer. Homodimer.

Its subcellular location is the secreted. It localises to the membrane. In terms of biological role, has bactericidal activity. May act as a ligand for C-C chemokine receptor CCR6. Positively regulates the sperm motility and bactericidal activity in a CCR6-dependent manner. Binds to CCR6 and triggers Ca2+ mobilization in the sperm which is important for its motility. In Cercopithecus erythrogaster (Red-bellied monkey), this protein is Beta-defensin 1 (DEFB1).